We begin with the raw amino-acid sequence, 301 residues long: uncharacterized protein (301 aa).

The HTH lysR-type domain occupies 1–58 (MDIRHLTYFLEVARLKSFTKASQSLYVSQPTISKMIKNLEEELGIELFYRNGRQVELT). The segment at residues 18 to 37 (FTKASQSLYVSQPTISKMIK) is a DNA-binding region (H-T-H motif).

This sequence belongs to the LysR transcriptional regulatory family.

This is an uncharacterized protein from Bacillus subtilis (strain 168).